A 343-amino-acid polypeptide reads, in one-letter code: Aspartate carbamoyltransferase catalytic subunit (343 aa).

The carbamoyl phosphate site is built by Arg-91 and Thr-92. Lys-119 contributes to the L-aspartate binding site. Carbamoyl phosphate is bound by residues Arg-141, His-171, and Gln-174. Positions 204 and 259 each coordinate L-aspartate. Gly-300 and Pro-301 together coordinate carbamoyl phosphate.

The protein belongs to the aspartate/ornithine carbamoyltransferase superfamily. ATCase family. As to quaternary structure, heterododecamer (2C3:3R2) of six catalytic PyrB chains organized as two trimers (C3), and six regulatory PyrI chains organized as three dimers (R2).

It catalyses the reaction carbamoyl phosphate + L-aspartate = N-carbamoyl-L-aspartate + phosphate + H(+). It participates in pyrimidine metabolism; UMP biosynthesis via de novo pathway; (S)-dihydroorotate from bicarbonate: step 2/3. Its function is as follows. Catalyzes the condensation of carbamoyl phosphate and aspartate to form carbamoyl aspartate and inorganic phosphate, the committed step in the de novo pyrimidine nucleotide biosynthesis pathway. This is Aspartate carbamoyltransferase catalytic subunit from Burkholderia ambifaria (strain MC40-6).